Consider the following 158-residue polypeptide: NAD(P)H-quinone oxidoreductase subunit O, chloroplastic (158 aa).

Residues 1 to 38 (MAFSATVSQLSSLSTISSSLPISSRRLPHRSLPQFTVK) constitute a chloroplast transit peptide. Residues 33 to 70 (PQFTVKAEAEKEKQSTQGKSDGEASPAATKTPKTLPKK) form a disordered region. Positions 56 to 70 (ASPAATKTPKTLPKK) are enriched in low complexity.

It belongs to the NDH complex subunit O family. Part of the chloroplast NDH complex, composed of a mixture of chloroplast and nucleus encoded subunits. Component of the NDH subcomplex A, at least composed of ndhH, ndhI, ndhJ, ndhK, ndhL, ndhM, ndhN and ndhO.

The protein resides in the plastid. It is found in the chloroplast thylakoid membrane. It carries out the reaction a plastoquinone + NADH + (n+1) H(+)(in) = a plastoquinol + NAD(+) + n H(+)(out). The catalysed reaction is a plastoquinone + NADPH + (n+1) H(+)(in) = a plastoquinol + NADP(+) + n H(+)(out). Its function is as follows. NDH shuttles electrons from NAD(P)H:plastoquinone, via FMN and iron-sulfur (Fe-S) centers, to quinones in the photosynthetic chain and possibly in a chloroplast respiratory chain. The immediate electron acceptor for the enzyme in this species is believed to be plastoquinone. Couples the redox reaction to proton translocation, and thus conserves the redox energy in a proton gradient. The chain is NAD(P)H-quinone oxidoreductase subunit O, chloroplastic from Arabidopsis thaliana (Mouse-ear cress).